Here is an 83-residue protein sequence, read N- to C-terminus: Small ribosomal subunit protein eS21 (83 aa).

Methionine 1 carries the N-acetylmethionine modification. Lysine 41 is covalently cross-linked (Glycyl lysine isopeptide (Lys-Gly) (interchain with G-Cter in SUMO2)). An N6-acetyllysine modification is found at lysine 81.

The protein belongs to the eukaryotic ribosomal protein eS21 family. In terms of assembly, component of the 40S small ribosomal subunit.

The protein localises to the cytoplasm. Its subcellular location is the cytosol. It is found in the rough endoplasmic reticulum. Its function is as follows. Component of the small ribosomal subunit. The ribosome is a large ribonucleoprotein complex responsible for the synthesis of proteins in the cell. The polypeptide is Small ribosomal subunit protein eS21 (RPS21) (Sus scrofa (Pig)).